The primary structure comprises 299 residues: Pyridoxal 5'-phosphate synthase subunit PdxS (299 aa).

Asp24 is a D-ribose 5-phosphate binding site. The active-site Schiff-base intermediate with D-ribose 5-phosphate is the Lys81. Gly153 lines the D-ribose 5-phosphate pocket. A D-glyceraldehyde 3-phosphate-binding site is contributed by Arg165. D-ribose 5-phosphate contacts are provided by residues Gly219 and 240 to 241 (GS).

Belongs to the PdxS/SNZ family. As to quaternary structure, in the presence of PdxT, forms a dodecamer of heterodimers.

The enzyme catalyses aldehydo-D-ribose 5-phosphate + D-glyceraldehyde 3-phosphate + L-glutamine = pyridoxal 5'-phosphate + L-glutamate + phosphate + 3 H2O + H(+). The protein operates within cofactor biosynthesis; pyridoxal 5'-phosphate biosynthesis. Catalyzes the formation of pyridoxal 5'-phosphate from ribose 5-phosphate (RBP), glyceraldehyde 3-phosphate (G3P) and ammonia. The ammonia is provided by the PdxT subunit. Can also use ribulose 5-phosphate and dihydroxyacetone phosphate as substrates, resulting from enzyme-catalyzed isomerization of RBP and G3P, respectively. In Methanococcus aeolicus (strain ATCC BAA-1280 / DSM 17508 / OCM 812 / Nankai-3), this protein is Pyridoxal 5'-phosphate synthase subunit PdxS.